A 327-amino-acid polypeptide reads, in one-letter code: GTP 3',8-cyclase (327 aa).

Residues 8–232 form the Radical SAM core domain; it reads AFARKFYYLR…LQRSRSDGPA (225 aa). Arg17 serves as a coordination point for GTP. Residues Cys24 and Cys28 each coordinate [4Fe-4S] cluster. Position 30 (Tyr30) interacts with S-adenosyl-L-methionine. Position 31 (Cys31) interacts with [4Fe-4S] cluster. Arg66 is a GTP binding site. Gly70 lines the S-adenosyl-L-methionine pocket. Thr97 provides a ligand contact to GTP. Residue Ser121 coordinates S-adenosyl-L-methionine. Lys158 contacts GTP. Residue Met192 coordinates S-adenosyl-L-methionine. [4Fe-4S] cluster is bound by residues Cys255 and Cys258. 260–262 contributes to the GTP binding site; that stretch reads RLR. A [4Fe-4S] cluster-binding site is contributed by Cys272.

The protein belongs to the radical SAM superfamily. MoaA family. As to quaternary structure, monomer and homodimer. [4Fe-4S] cluster serves as cofactor.

It carries out the reaction GTP + AH2 + S-adenosyl-L-methionine = (8S)-3',8-cyclo-7,8-dihydroguanosine 5'-triphosphate + 5'-deoxyadenosine + L-methionine + A + H(+). The protein operates within cofactor biosynthesis; molybdopterin biosynthesis. Its function is as follows. Catalyzes the cyclization of GTP to (8S)-3',8-cyclo-7,8-dihydroguanosine 5'-triphosphate. In Photorhabdus laumondii subsp. laumondii (strain DSM 15139 / CIP 105565 / TT01) (Photorhabdus luminescens subsp. laumondii), this protein is GTP 3',8-cyclase.